Reading from the N-terminus, the 110-residue chain is Large ribosomal subunit protein P1 (110 aa).

Alanine 2 is subject to Blocked amino end (Ala). Positions 69–83 (AAPAAGGAAAATEAP) are enriched in low complexity. A disordered region spans residues 69 to 110 (AAPAAGGAAAATEAPAAKEEKKEEKKEESEEEDEDMGFGLFD). The segment covering 84–96 (AAKEEKKEEKKEE) has biased composition (basic and acidic residues). Position 97 is a phosphoserine; in form eL12'-P (serine 97).

In terms of assembly, part of the ribosomal stalk of the large ribosomal subunit; P1 and P2 exist as dimers which assemble on the P0 scaffold. Phosphorylation of Ser-97 converts eL12' to eL12'-P.

Plays an important role in the elongation step of protein synthesis. In Artemia salina (Brine shrimp), this protein is Large ribosomal subunit protein P1.